A 460-amino-acid chain; its full sequence is G-protein coupled receptor 22 (460 aa).

Over 1-74 (MESMPSSLTH…YPVSFQVSLT (74 aa)) the chain is Cytoplasmic. Residues 75–95 (GFLMLEIVLGLSSNLTVLALY) traverse the membrane as a helical segment. Residues 96–114 (CMKSNLVSSVSNIVTMNLH) are Extracellular-facing. The chain crosses the membrane as a helical span at residues 115 to 135 (VLDVLVCVGCIPLTIVVVLLP). Over 136 to 144 (LEGNNALIC) the chain is Cytoplasmic. The helical transmembrane segment at 145–165 (CFHEACVSFASVATAANVLAI) threads the bilayer. Over 166 to 185 (TLDRYDISVRPANRVLTMGR) the chain is Extracellular. The helical transmembrane segment at 186-206 (AVALLGSIWALSFFSFLVPFI) threads the bilayer. Over 207–235 (EEGFFSQAGNERNQTEAEEPSNEYYTELG) the chain is Cytoplasmic. A helical transmembrane segment spans residues 236–256 (LYYHLLAQIPIFFFTAVVMLV). At 257-343 (TYYKILQALN…ERQKRVFRMS (87 aa)) the chain is on the extracellular side. Basic residues predominate over residues 276 to 286 (VPKKKPRKKKT). Residues 276–309 (VPKKKPRKKKTISMTSTQPESTDASQSSAGRNAP) form a disordered region. Polar residues predominate over residues 287–305 (ISMTSTQPESTDASQSSAG). Residues 344–364 (LLIISTFLLCWTPITVLNTVI) traverse the membrane as a helical segment. The Cytoplasmic portion of the chain corresponds to 365–377 (LSVGPSNFTVRLR). Residues 378–398 (LGFLVMAYGTTIFHPLLYAFT) form a helical membrane-spanning segment. Topologically, residues 399–460 (RQKFQKVLKS…QKCLSSEDVE (62 aa)) are extracellular.

The protein belongs to the G-protein coupled receptor 1 family.

It is found in the cell membrane. In terms of biological role, orphan G-protein coupled receptor that regulates cilia length and structure in the Kupffer's vesicle leading to the left-right asymmetry development by establishing a directional fluid flow. The chain is G-protein coupled receptor 22 (gpr22a) from Danio rerio (Zebrafish).